The chain runs to 505 residues: Lysine--tRNA ligase (505 aa).

Positions 415 and 422 each coordinate Mg(2+).

Belongs to the class-II aminoacyl-tRNA synthetase family. Homodimer. It depends on Mg(2+) as a cofactor.

It localises to the cytoplasm. The catalysed reaction is tRNA(Lys) + L-lysine + ATP = L-lysyl-tRNA(Lys) + AMP + diphosphate. This Serratia proteamaculans (strain 568) protein is Lysine--tRNA ligase.